The following is a 149-amino-acid chain: Large ribosomal subunit protein bL9 (149 aa).

The protein belongs to the bacterial ribosomal protein bL9 family.

In terms of biological role, binds to the 23S rRNA. The sequence is that of Large ribosomal subunit protein bL9 from Tolumonas auensis (strain DSM 9187 / NBRC 110442 / TA 4).